A 205-amino-acid polypeptide reads, in one-letter code: MKIVAAEFVTSAVNPGGYPPGNLPEVAFVGRSNVGKSSLINKVVNRKGLAKTSSTPGRTQLINFFNINNDQFLMVDLPGYGYAKVPTDVRIKWGKMIEGYLKERECLKGVVLLIDSRHTPTAQDKQMYEWLQYYHVPTVVVATKVDKLSNNQWAKQQAVIKKSLPLSKEHQLISFSAETGRGKEKLLKVLDEFIHKDGINLTAIE.

The EngB-type G domain maps to 22–196; the sequence is NLPEVAFVGR…LKVLDEFIHK (175 aa). GTP contacts are provided by residues 30–37, 57–61, 76–79, 143–146, and 175–177; these read GRSNVGKS, GRTQL, DLPG, TKVD, and FSA. 2 residues coordinate Mg(2+): serine 37 and threonine 59.

Belongs to the TRAFAC class TrmE-Era-EngA-EngB-Septin-like GTPase superfamily. EngB GTPase family. Mg(2+) serves as cofactor.

Necessary for normal cell division and for the maintenance of normal septation. This chain is Probable GTP-binding protein EngB, found in Desulforamulus reducens (strain ATCC BAA-1160 / DSM 100696 / MI-1) (Desulfotomaculum reducens).